A 396-amino-acid polypeptide reads, in one-letter code: Acetate kinase (396 aa).

Asn8 provides a ligand contact to Mg(2+). Residue Lys15 participates in ATP binding. Arg89 is a substrate binding site. Asp146 (proton donor/acceptor) is an active-site residue. Residues 206–210 (HIGNG), 283–285 (DMR), and 331–335 (GIGEN) each bind ATP. Glu383 lines the Mg(2+) pocket.

Belongs to the acetokinase family. As to quaternary structure, homodimer. It depends on Mg(2+) as a cofactor. Mn(2+) is required as a cofactor.

It is found in the cytoplasm. It catalyses the reaction acetate + ATP = acetyl phosphate + ADP. Its pathway is metabolic intermediate biosynthesis; acetyl-CoA biosynthesis; acetyl-CoA from acetate: step 1/2. In terms of biological role, catalyzes the formation of acetyl phosphate from acetate and ATP. Can also catalyze the reverse reaction. This is Acetate kinase from Streptococcus gordonii (strain Challis / ATCC 35105 / BCRC 15272 / CH1 / DL1 / V288).